We begin with the raw amino-acid sequence, 238 residues long: Adapter protein MecA (238 aa).

The span at 120 to 136 (QQQKDNKQNQDQNERNR) shows a compositional bias: basic and acidic residues. A disordered region spans residues 120-139 (QQQKDNKQNQDQNERNRQNT).

This sequence belongs to the MecA family. Homodimer.

Enables the recognition and targeting of unfolded and aggregated proteins to the ClpC protease or to other proteins involved in proteolysis. The protein is Adapter protein MecA of Staphylococcus saprophyticus subsp. saprophyticus (strain ATCC 15305 / DSM 20229 / NCIMB 8711 / NCTC 7292 / S-41).